The primary structure comprises 211 residues: MTTLTRQDLNFGQVVADVLCEFLEVAVHLILYVREVYPVGIFQKRKKYNVPVQMSCHPELNQYIQDTLHCVKPLLEKNDVEKVVVVILDKEHRPVEKFVFEITQPPLLPISSDSLLSHVEQLLRAFILKISVCDAVLDHNPPGCTFTVLVHTREAATRNMEKIQVIKDFPWILADEQDVHMHDPRLIPLKTMTSDILKMQLYVEERAHKSS.

In terms of domain architecture, HORMA spans 13 to 203 (QVVADVLCEF…SDILKMQLYV (191 aa)). Residues 21 to 155 (EFLEVAVHLI…FTVLVHTREA (135 aa)) are mediates interaction with REV1 and REV3L and homodimerization.

Homooligomer. Heterodimer with REV3L. This dimer forms the minimal DNA polymerase zeta complex (Pol-zeta2), with REV3L bearing DNA polymerase catalytic activity, although its activity is very low in this context. Component of the tetrameric Pol-zeta complex (Pol-zeta4), which consists of REV3L, MAD2L2, POLD2 and POLD3; Pol-zeta4 is the fully active form of DNA polymerase zeta. Component of the shieldin complex, consisting of SHLD1, SHLD2, SHLD3 and MAD2L2/REV7. Within the complex, SHLD2 forms a scaffold which interacts with a SHLD3-MAD2L2 subcomplex via its N-terminus, and with SHLD1 via its C-terminus. Interacts with REV1. Interacts with ADAM9. Interacts with CHAMP1. Interacts with FZR1 (in complex with the anaphase promoting complex APC). May interact with CDC20. Interacts with RAN. Interacts with ELK1; the interaction is direct and recruits MAD2L2 to ELK1-specific promoters. May interact with the JNK kinases MAPK8 and/or MAPK9 to stimulate ELK1 phosphorylation and transcriptional activity upon DNA damage. Interacts with TCF7L2; prevents its binding to promoters and negatively modulates its transcriptional activity. Interacts with YY1AP1. Interacts with PRCC; the interaction is direct. Interacts with POGZ. Interacts with ASTE1.

The protein localises to the nucleus. The protein resides in the cytoplasm. It localises to the cytoskeleton. It is found in the spindle. Functionally, adapter protein able to interact with different proteins and involved in different biological processes. Mediates the interaction between the error-prone DNA polymerase zeta catalytic subunit REV3L and the inserter polymerase REV1, thereby mediating the second polymerase switching in translesion DNA synthesis. Translesion DNA synthesis releases the replication blockade of replicative polymerases, stalled in presence of DNA lesions. Component of the shieldin complex, which plays an important role in repair of DNA double-stranded breaks (DSBs). During G1 and S phase of the cell cycle, the complex functions downstream of TP53BP1 to promote non-homologous end joining (NHEJ) and suppress DNA end resection. Mediates various NHEJ-dependent processes including immunoglobulin class-switch recombination, and fusion of unprotected telomeres. May also regulate another aspect of cellular response to DNA damage through regulation of the JNK-mediated phosphorylation and activation of the transcriptional activator ELK1. Inhibits the FZR1- and probably CDC20-mediated activation of the anaphase promoting complex APC thereby regulating progression through the cell cycle. Regulates TCF7L2-mediated gene transcription and may play a role in epithelial-mesenchymal transdifferentiation. The polypeptide is Mitotic spindle assembly checkpoint protein MAD2B (MAD2L2) (Bos taurus (Bovine)).